A 134-amino-acid polypeptide reads, in one-letter code: Transcription antitermination protein NusB (134 aa).

Belongs to the NusB family.

Functionally, involved in transcription antitermination. Required for transcription of ribosomal RNA (rRNA) genes. Binds specifically to the boxA antiterminator sequence of the ribosomal RNA (rrn) operons. The sequence is that of Transcription antitermination protein NusB from Shewanella oneidensis (strain ATCC 700550 / JCM 31522 / CIP 106686 / LMG 19005 / NCIMB 14063 / MR-1).